A 335-amino-acid chain; its full sequence is Transmembrane protein 120B-B (335 aa).

Residues M1–N39 adopt a coiled-coil conformation. 6 helical membrane-spanning segments follow: residues S100 to S116, F130 to H150, V157 to I177, V193 to F213, F268 to F288, and Q300 to L320.

This sequence belongs to the TMEM120 family.

It is found in the nucleus inner membrane. Functionally, necessary for efficient adipogenesis. Does not show ion channel activity. The sequence is that of Transmembrane protein 120B-B (tmem120b-b) from Xenopus laevis (African clawed frog).